The following is a 101-amino-acid chain: Large ribosomal subunit protein bL21 (101 aa).

Belongs to the bacterial ribosomal protein bL21 family. As to quaternary structure, part of the 50S ribosomal subunit. Contacts protein L20.

In terms of biological role, this protein binds to 23S rRNA in the presence of protein L20. The protein is Large ribosomal subunit protein bL21 of Sulfurovum sp. (strain NBC37-1).